Here is a 43-residue protein sequence, read N- to C-terminus: Protein PsbN (43 aa).

A helical membrane pass occupies residues Thr5 to Phe27.

The protein belongs to the PsbN family.

Its subcellular location is the plastid. The protein resides in the chloroplast thylakoid membrane. Its function is as follows. May play a role in photosystem I and II biogenesis. This Chara vulgaris (Common stonewort) protein is Protein PsbN.